A 363-amino-acid chain; its full sequence is Putative agmatine deiminase 1 (363 aa).

C356 (amidino-cysteine intermediate) is an active-site residue.

This sequence belongs to the agmatine deiminase family.

The catalysed reaction is agmatine + H2O = N-carbamoylputrescine + NH4(+). The chain is Putative agmatine deiminase 1 from Listeria monocytogenes serovar 1/2a (strain ATCC BAA-679 / EGD-e).